The sequence spans 77 residues: Translation initiation factor IF-1, chloroplastic (77 aa).

An S1-like domain is found at 1-71; the sequence is MKEQKLIHEG…TRGRIIYRLR (71 aa).

It belongs to the IF-1 family. In terms of assembly, component of the 30S ribosomal translation pre-initiation complex which assembles on the 30S ribosome in the order IF-2 and IF-3, IF-1 and N-formylmethionyl-tRNA(fMet); mRNA recruitment can occur at any time during PIC assembly.

It localises to the plastid. The protein resides in the chloroplast. One of the essential components for the initiation of protein synthesis. Stabilizes the binding of IF-2 and IF-3 on the 30S subunit to which N-formylmethionyl-tRNA(fMet) subsequently binds. Helps modulate mRNA selection, yielding the 30S pre-initiation complex (PIC). Upon addition of the 50S ribosomal subunit IF-1, IF-2 and IF-3 are released leaving the mature 70S translation initiation complex. This is Translation initiation factor IF-1, chloroplastic from Phalaenopsis aphrodite subsp. formosana (Moth orchid).